Here is a 403-residue protein sequence, read N- to C-terminus: Argininosuccinate synthase (403 aa).

Residues 12-20 (AYSGGLDTS) and Ala-39 contribute to the ATP site. L-citrulline is bound by residues Tyr-91 and Ser-96. Gly-121 serves as a coordination point for ATP. Thr-123, Asn-127, and Asp-128 together coordinate L-aspartate. Asn-127 serves as a coordination point for L-citrulline. Residues Arg-131, Ser-180, Ser-189, Glu-265, and Tyr-277 each coordinate L-citrulline.

This sequence belongs to the argininosuccinate synthase family. Type 1 subfamily. Homotetramer.

It is found in the cytoplasm. It carries out the reaction L-citrulline + L-aspartate + ATP = 2-(N(omega)-L-arginino)succinate + AMP + diphosphate + H(+). The protein operates within amino-acid biosynthesis; L-arginine biosynthesis; L-arginine from L-ornithine and carbamoyl phosphate: step 2/3. The protein is Argininosuccinate synthase of Vibrio vulnificus (strain CMCP6).